Reading from the N-terminus, the 329-residue chain is Beta-ketoacyl-[acyl-carrier-protein] synthase III (329 aa).

Residues Cys123 and His256 contribute to the active site. The tract at residues 257 to 261 is ACP-binding; that stretch reads QANIR. Asn286 is a catalytic residue.

The protein belongs to the thiolase-like superfamily. FabH family. As to quaternary structure, homodimer.

It is found in the cytoplasm. The enzyme catalyses malonyl-[ACP] + acetyl-CoA + H(+) = 3-oxobutanoyl-[ACP] + CO2 + CoA. Its pathway is lipid metabolism; fatty acid biosynthesis. Functionally, catalyzes the condensation reaction of fatty acid synthesis by the addition to an acyl acceptor of two carbons from malonyl-ACP. Catalyzes the first condensation reaction which initiates fatty acid synthesis and may therefore play a role in governing the total rate of fatty acid production. Possesses both acetoacetyl-ACP synthase and acetyl transacylase activities. Its substrate specificity determines the biosynthesis of branched-chain and/or straight-chain of fatty acids. The protein is Beta-ketoacyl-[acyl-carrier-protein] synthase III of Burkholderia vietnamiensis (strain G4 / LMG 22486) (Burkholderia cepacia (strain R1808)).